A 295-amino-acid chain; its full sequence is GTPase Era (295 aa).

An Era-type G domain is found at 7–176 (KTVSVCIIGR…ITSKAKIAPW (170 aa)). The G1 stretch occupies residues 15–22 (GRPNSGKS). 15-22 (GRPNSGKS) provides a ligand contact to GTP. The interval 41–45 (QTTRS) is G2. Positions 62 to 65 (DTPG) are G3. GTP is bound by residues 62-66 (DTPGI) and 124-127 (NKIE). The interval 124–127 (NKIE) is G4. Residues 152-154 (ISA) form a G5 region. Residues 204 to 281 (LQQELPYKLT…HLFLFVKVRE (78 aa)) enclose the KH type-2 domain.

It belongs to the TRAFAC class TrmE-Era-EngA-EngB-Septin-like GTPase superfamily. Era GTPase family. Monomer.

The protein resides in the cytoplasm. The protein localises to the cell inner membrane. Functionally, an essential GTPase that binds both GDP and GTP, with rapid nucleotide exchange. Plays a role in 16S rRNA processing and 30S ribosomal subunit biogenesis and possibly also in cell cycle regulation and energy metabolism. The protein is GTPase Era of Rickettsia canadensis (strain McKiel).